A 159-amino-acid polypeptide reads, in one-letter code: 2-C-methyl-D-erythritol 2,4-cyclodiphosphate synthase (159 aa).

Positions 8 and 10 each coordinate a divalent metal cation. Residues 8-10 and 34-35 contribute to the 4-CDP-2-C-methyl-D-erythritol 2-phosphate site; these read DVH and HS. Histidine 42 is an a divalent metal cation binding site. 4-CDP-2-C-methyl-D-erythritol 2-phosphate contacts are provided by residues 56–58, 61–65, 100–106, 132–135, phenylalanine 139, and arginine 142; these read DIG, FPDTD, AQAPRML, and TTTE.

It belongs to the IspF family. As to quaternary structure, homotrimer. It depends on a divalent metal cation as a cofactor.

It carries out the reaction 4-CDP-2-C-methyl-D-erythritol 2-phosphate = 2-C-methyl-D-erythritol 2,4-cyclic diphosphate + CMP. It participates in isoprenoid biosynthesis; isopentenyl diphosphate biosynthesis via DXP pathway; isopentenyl diphosphate from 1-deoxy-D-xylulose 5-phosphate: step 4/6. Involved in the biosynthesis of isopentenyl diphosphate (IPP) and dimethylallyl diphosphate (DMAPP), two major building blocks of isoprenoid compounds. Catalyzes the conversion of 4-diphosphocytidyl-2-C-methyl-D-erythritol 2-phosphate (CDP-ME2P) to 2-C-methyl-D-erythritol 2,4-cyclodiphosphate (ME-CPP) with a corresponding release of cytidine 5-monophosphate (CMP). In Escherichia coli O45:K1 (strain S88 / ExPEC), this protein is 2-C-methyl-D-erythritol 2,4-cyclodiphosphate synthase.